The sequence spans 541 residues: Protein wntless homolog (541 aa).

Topologically, residues 1–15 (MAGAIIENMSTKKLC) are cytoplasmic. Residues 16–36 (IVGGILLVFQIVAFLVGGLIA) form a helical membrane-spanning segment. Topologically, residues 37–232 (PAPTTAVPYT…GIHQNGGFTK (196 aa)) are lumenal. Residues 101 to 232 (MEMSPWFQFM…GIHQNGGFTK (132 aa)) are interaction with Wnt proteins. The chain crosses the membrane as a helical span at residues 233-253 (VWFAMKTFLTPSIFIIMVWYW). Residues 254–268 (RRITMMSRPPVLLEK) lie on the Cytoplasmic side of the membrane. Residues 269-289 (VIFALGISMTFINIPVEWFSI) traverse the membrane as a helical segment. Residues 290–303 (GFDWTWMLLFGDIR) are Lumenal-facing. The helical transmembrane segment at 304–324 (QGIFYAMLLSFWIIFCGEHMM) threads the bilayer. Over 325–331 (DQHERNH) the chain is Cytoplasmic. Residues 332 to 352 (IAGYWKQVGPIAVGSFCLFIF) form a helical membrane-spanning segment. Topologically, residues 353–380 (DMCERGVQLTNPFYSIWTTDVGTELAMA) are lumenal. Residues 381–401 (FIIVAGICLCLYFLFLCFMVF) form a helical membrane-spanning segment. The Cytoplasmic portion of the chain corresponds to 402–431 (QVFRNISGKQSSLPAMSKVRRLHYEGLIFR). Residues 432 to 452 (FKFLMLITLACAAMTVIFFIV) form a helical membrane-spanning segment. Residues 453-471 (SQVSEGHWKWGGVTVQVSS) are Lumenal-facing. The helical transmembrane segment at 472–492 (AFFTGIYGMWNLYVFALMFLY) threads the bilayer. Residues 493 to 541 (APSHKNYGEDQSNGDLGVHSGEELQLTTTITHVDGPTEIYKLTRKEAQE) lie on the Cytoplasmic side of the membrane.

Belongs to the wntless family. In terms of assembly, interacts with WNT3A. Interacts with WNT1, WNT3 and WNT5. N-glycosylated. In terms of tissue distribution, expressed in the brain, skeletal muscle, heart muscle, lung, gut, liver, and kidney (at protein level). In the brain, expressed in the cortex, striatum, hippocampus and to a lesser extent in the cerebellum (at protein level). Expressed in kidney, lung, skin, intestine, brain, spinal cord, skeleton, eyes, excretion glands, tooth and palatal shelves. In the cerebellum, expressed in Purkinje cells.

It localises to the golgi apparatus membrane. Its subcellular location is the cytoplasmic vesicle membrane. The protein resides in the cell membrane. It is found in the endoplasmic reticulum membrane. The protein localises to the early endosome membrane. Functionally, regulates Wnt proteins sorting and secretion in a feedback regulatory mechanism. This reciprocal interaction plays a key role in the regulation of expression, subcellular location, binding and organelle-specific association of Wnt proteins. Also plays an important role in establishment of the anterior-posterior body axis formation during development. This chain is Protein wntless homolog (Wls), found in Mus musculus (Mouse).